The chain runs to 506 residues: MKQILFMDTTLRDGEQSPGVNLNEQEKLQIARQLERLGIHVMEAGFAAASEGDFQSVKRIANTIQNATVMSLARAKESDIRRAYEAVKGAVSPRLHVFLATSDIHMKYKLCMSKEDVLDSIHRSVTLGKSLFPTVQFSAEDATRTARDFLAEAIEVAIRAGANVINIPDTVGYTNPEEYYSLFKYLQESVPSYEKAIFSCHCHDDLGMAVANSLAAVEGGALQVEGTINGIGERAGNAALEEVAVALHIRKDFYKAEPSITLKEIKATSTLVSRLTGMVVPKNKAIVGANAFAHESGIHQDGVLKEVTTYEIIEPALVGESQNLFVLGKHSGRHAFTEKMKELGYEFTNDERDAVFEAFKKLADRKKEITEEDLRALMLGEAAFAAQQYNITQLQVHFVSNSTQCATVVLKDEEGNVFEDAATGSGSIEAIYNAIQRILGLECELADYRIQSITQGQDALAHVHVELKEGAHQVSGFGVAQDVLEASARAYVHAAGKLKSFIQLVK.

A Pyruvate carboxyltransferase domain is found at 4 to 266 (ILFMDTTLRD…EPSITLKEIK (263 aa)). The Mn(2+) site is built by D13, H201, H203, and N237. Positions 390-506 (NITQLQVHFV…KLKSFIQLVK (117 aa)) are regulatory domain.

Belongs to the alpha-IPM synthase/homocitrate synthase family. LeuA type 1 subfamily. Homodimer. Requires Mn(2+) as cofactor.

The protein resides in the cytoplasm. It carries out the reaction 3-methyl-2-oxobutanoate + acetyl-CoA + H2O = (2S)-2-isopropylmalate + CoA + H(+). It functions in the pathway amino-acid biosynthesis; L-leucine biosynthesis; L-leucine from 3-methyl-2-oxobutanoate: step 1/4. Functionally, catalyzes the condensation of the acetyl group of acetyl-CoA with 3-methyl-2-oxobutanoate (2-ketoisovalerate) to form 3-carboxy-3-hydroxy-4-methylpentanoate (2-isopropylmalate). This chain is 2-isopropylmalate synthase, found in Bacillus thuringiensis subsp. konkukian (strain 97-27).